A 76-amino-acid chain; its full sequence is Small ribosomal subunit protein eS17 (76 aa).

Belongs to the eukaryotic ribosomal protein eS17 family.

The sequence is that of Small ribosomal subunit protein eS17 from Metallosphaera sedula (strain ATCC 51363 / DSM 5348 / JCM 9185 / NBRC 15509 / TH2).